The primary structure comprises 1072 residues: Carbamoyl phosphate synthase large chain (1072 aa).

The interval 1 to 401 (MPKRLDINTI…SLLKAVRSLE (401 aa)) is carboxyphosphate synthetic domain. Residues arginine 129, arginine 169, glycine 175, glycine 176, lysine 208, isoleucine 210, glutamate 215, glycine 241, valine 242, histidine 243, glutamine 284, and glutamate 298 each coordinate ATP. Residues 133–327 (RTLMQDLNEP…IAKLAAKIAV (195 aa)) form the ATP-grasp 1 domain. Positions 284, 298, and 300 each coordinate Mg(2+). Residues glutamine 284, glutamate 298, and asparagine 300 each coordinate Mn(2+). The tract at residues 402–546 (LGIYHLELDH…YSTYAEENES (145 aa)) is oligomerization domain. The carbamoyl phosphate synthetic domain stretch occupies residues 547–929 (IVTDRKSVVV…ALYKGLVASG (383 aa)). The ATP-grasp 2 domain maps to 671-861 (EAALTKLGIP…MANVATKVIL (191 aa)). The ATP site is built by arginine 707, arginine 746, glutamate 752, glycine 777, valine 778, histidine 779, serine 780, glutamine 820, and glutamate 832. Mg(2+) contacts are provided by glutamine 820, glutamate 832, and asparagine 834. Residues glutamine 820, glutamate 832, and asparagine 834 each coordinate Mn(2+). Positions 930–1072 (INIPTHGSVI…QTKRHEVVHA (143 aa)) constitute an MGS-like domain. Residues 930 to 1072 (INIPTHGSVI…QTKRHEVVHA (143 aa)) form an allosteric domain region.

Belongs to the CarB family. Composed of two chains; the small (or glutamine) chain promotes the hydrolysis of glutamine to ammonia, which is used by the large (or ammonia) chain to synthesize carbamoyl phosphate. Tetramer of heterodimers (alpha,beta)4. Mg(2+) is required as a cofactor. Mn(2+) serves as cofactor.

It carries out the reaction hydrogencarbonate + L-glutamine + 2 ATP + H2O = carbamoyl phosphate + L-glutamate + 2 ADP + phosphate + 2 H(+). The enzyme catalyses hydrogencarbonate + NH4(+) + 2 ATP = carbamoyl phosphate + 2 ADP + phosphate + 2 H(+). It functions in the pathway amino-acid biosynthesis; L-arginine biosynthesis; carbamoyl phosphate from bicarbonate: step 1/1. The protein operates within pyrimidine metabolism; UMP biosynthesis via de novo pathway; (S)-dihydroorotate from bicarbonate: step 1/3. Large subunit of the glutamine-dependent carbamoyl phosphate synthetase (CPSase). CPSase catalyzes the formation of carbamoyl phosphate from the ammonia moiety of glutamine, carbonate, and phosphate donated by ATP, constituting the first step of 2 biosynthetic pathways, one leading to arginine and/or urea and the other to pyrimidine nucleotides. The large subunit (synthetase) binds the substrates ammonia (free or transferred from glutamine from the small subunit), hydrogencarbonate and ATP and carries out an ATP-coupled ligase reaction, activating hydrogencarbonate by forming carboxy phosphate which reacts with ammonia to form carbamoyl phosphate. This is Carbamoyl phosphate synthase large chain from Bacillus cereus (strain ATCC 10987 / NRS 248).